The chain runs to 294 residues: NAD kinase (294 aa).

The Proton acceptor role is filled by D74. NAD(+) is bound by residues 74–75 (DG), 148–149 (NE), H159, R176, D178, 189–194 (TAYSLS), and Q249.

It belongs to the NAD kinase family. A divalent metal cation is required as a cofactor.

Its subcellular location is the cytoplasm. The catalysed reaction is NAD(+) + ATP = ADP + NADP(+) + H(+). In terms of biological role, involved in the regulation of the intracellular balance of NAD and NADP, and is a key enzyme in the biosynthesis of NADP. Catalyzes specifically the phosphorylation on 2'-hydroxyl of the adenosine moiety of NAD to yield NADP. The chain is NAD kinase from Vibrio cholerae serotype O1 (strain ATCC 39541 / Classical Ogawa 395 / O395).